The chain runs to 539 residues: Phosphoenolpyruvate carboxykinase (ATP) (539 aa).

3 residues coordinate substrate: Arg-61, Tyr-195, and Lys-201. ATP contacts are provided by residues Lys-201, His-220, and 238–246 (GLSGTGKTT). The Mn(2+) site is built by Lys-201 and His-220. Residue Asp-259 participates in Mn(2+) binding. Positions 287, 325, and 450 each coordinate ATP. A substrate-binding site is contributed by Arg-325.

The protein belongs to the phosphoenolpyruvate carboxykinase (ATP) family. Mn(2+) serves as cofactor.

Its subcellular location is the cytoplasm. It catalyses the reaction oxaloacetate + ATP = phosphoenolpyruvate + ADP + CO2. Its pathway is carbohydrate biosynthesis; gluconeogenesis. Its function is as follows. Involved in the gluconeogenesis. Catalyzes the conversion of oxaloacetate (OAA) to phosphoenolpyruvate (PEP) through direct phosphoryl transfer between the nucleoside triphosphate and OAA. The protein is Phosphoenolpyruvate carboxykinase (ATP) of Methylobacterium radiotolerans (strain ATCC 27329 / DSM 1819 / JCM 2831 / NBRC 15690 / NCIMB 10815 / 0-1).